The primary structure comprises 832 residues: Translation initiation factor IF-2 (832 aa).

Residues 1–10 are compositionally biased toward basic and acidic residues; it reads MLMSDVEKFG. 3 disordered regions span residues 1-87, 120-148, and 163-201; these read MLMS…SRSA, RDEE…PAAA, and IAPG…GGGG. Residues 11 to 20 are compositionally biased toward gly residues; it reads GDCGSSGGSG. Polar residues-rich tracts occupy residues 29–42 and 71–87; these read RAST…STGG and SPYT…SRSA. A tr-type G domain is found at 331 to 500; the sequence is PRPPVVTVMG…LLLAEMLELR (170 aa). The tract at residues 340-347 is G1; the sequence is GHVDHGKT. 340 to 347 lines the GTP pocket; the sequence is GHVDHGKT. The tract at residues 365-369 is G2; sequence GITQH. The segment at 386-389 is G3; that stretch reads DTPG. GTP is bound by residues 386 to 390 and 440 to 443; these read DTPGH and NKID. Residues 440–443 form a G4 region; the sequence is NKID. A G5 region spans residues 476-478; it reads SAK.

Belongs to the TRAFAC class translation factor GTPase superfamily. Classic translation factor GTPase family. IF-2 subfamily.

It localises to the cytoplasm. Functionally, one of the essential components for the initiation of protein synthesis. Protects formylmethionyl-tRNA from spontaneous hydrolysis and promotes its binding to the 30S ribosomal subunits. Also involved in the hydrolysis of GTP during the formation of the 70S ribosomal complex. This Anaplasma marginale (strain St. Maries) protein is Translation initiation factor IF-2.